The chain runs to 1528 residues: 5'-3' exoribonuclease 1 (1528 aa).

Disordered stretches follow at residues 1246–1331, 1431–1455, and 1470–1528; these read SKKA…KSSE, PPPA…NVSD, and LKKF…DEST. Positions 1274–1304 are enriched in basic and acidic residues; that stretch reads QSEEKLRKERAHDLLNFIKKDTNEKNSESVD. Positions 1317–1326 are enriched in basic residues; that stretch reads AKKVLLKRPA. Polar residues predominate over residues 1500 to 1517; the sequence is SSGTNSTECQSPKSQSNA. A Phosphothreonine modification is found at Thr-1506. Residue Ser-1510 is modified to Phosphoserine. Basic and acidic residues predominate over residues 1518–1528; sequence ADRDNKKDEST.

The protein belongs to the 5'-3' exonuclease family. Requires Mg(2+) as cofactor.

Its subcellular location is the cytoplasm. It is found in the perinuclear region. The protein localises to the P-body. Its activity is regulated as follows. 3'-phosphoadenosine 5'-phosphate (pAp) is an inhibitor of KEM1. Sodium-induced GCN4 expression reduces pAp accumulation by activating HAL2 expression, and therefore maintains mRNA degradation capacity which is likely to be important for the accurate and rapid adaptation of gene expression to salt stress. In terms of biological role, multifunctional protein that exhibits several independent functions at different levels of the cellular processes. 5'-3' exonuclease component of the nonsense-mediated mRNA decay (NMD) which is a highly conserved mRNA degradation pathway, an RNA surveillance system whose role is to identify and rid cells of mRNA with premature termination codons and thus prevents accumulation of potentially harmful truncated proteins. The NMD pathway has a second role regulating the decay of wild-type mRNAs, and especially mRNAs that are important for telomere functions. Participate in CTH2-mediated and VTS1-mediated mRNA turnover. Involved in the degradation of several hypomodified mature tRNA species and participates in the 5'-processing or the degradation of the snoRNA precursors and rRNA processing. Involved in defense against virus and suppresses viral RNA recombination by rapidly removing the 5'-truncated RNAs, the substrates of recombination, and thus reducing the chance for recombination to occur in the parental strain. Required for the assembly of the virus-like particles of the Ty3 retrotransposon and contributes to the efficient generation of narnavirus 20S RNA by playing a major role in the elimination of the non-viral upstream sequences from the primary transcripts. Degrades single-stranded DNA (ss-DNA) and can renature complementary ss-DNA as well as catalyzes the formation of heteroduplex DNA from circular ss-DNA and homologous linear ds-DNA in vitro. Acts as a microtubule-associated protein which interacts with cytoplasmic microtubules through beta-tubulin and promotes in vitro assembly of tubulin into microtubules. Associates with microtubule functions such as chromosome transmission, nuclear migration, and SPB duplication. Has also a role in G1 to S transition and is involved in nuclear fusion during karyogamy. Required for the expression of ROK1 at the post-transcriptional level and for the alpha-factor induction of the karyogamy genes KAR3 and KAR4. Plays a role in filamentous growth. The protein is 5'-3' exoribonuclease 1 (XRN1) of Saccharomyces cerevisiae (strain ATCC 204508 / S288c) (Baker's yeast).